Reading from the N-terminus, the 304-residue chain is Phosphate transport system permease protein PstA 1 (304 aa).

6 helical membrane-spanning segments follow: residues 36–56 (FFFT…WVVI), 96–116 (AGVA…YLVE), 132–152 (VLAG…WIAT), 155–175 (FQQS…PVVV), 204–224 (IVRI…LLSI), and 276–296 (WGAA…AAMI). Positions 89-297 (LYGTLVQAGV…TINLAAAMIR (209 aa)) constitute an ABC transmembrane type-1 domain.

Belongs to the binding-protein-dependent transport system permease family. CysTW subfamily.

The protein localises to the cell membrane. Part of the binding-protein-dependent transport system for phosphate; probably responsible for the translocation of the substrate across the membrane. The protein is Phosphate transport system permease protein PstA 1 (pstA1) of Mycobacterium tuberculosis (strain CDC 1551 / Oshkosh).